The sequence spans 269 residues: Tryptophan synthase alpha chain (269 aa).

Residues glutamate 49 and aspartate 60 each act as proton acceptor in the active site.

Belongs to the TrpA family. In terms of assembly, tetramer of two alpha and two beta chains.

It carries out the reaction (1S,2R)-1-C-(indol-3-yl)glycerol 3-phosphate + L-serine = D-glyceraldehyde 3-phosphate + L-tryptophan + H2O. It functions in the pathway amino-acid biosynthesis; L-tryptophan biosynthesis; L-tryptophan from chorismate: step 5/5. The alpha subunit is responsible for the aldol cleavage of indoleglycerol phosphate to indole and glyceraldehyde 3-phosphate. The sequence is that of Tryptophan synthase alpha chain from Pseudomonas fluorescens (strain SBW25).